A 442-amino-acid polypeptide reads, in one-letter code: Coiled-coil domain-containing protein 91 (442 aa).

The segment at 1-16 is GGA1-binding motif; sequence MDDDDFGGFEAAETFD. The interval 1–27 is disordered; sequence MDDDDFGGFEAAETFDGEQGGNQAVSP. Phosphoserine occurs at positions 43 and 46. The disordered stretch occupies residues 48 to 79; that stretch reads ELILDHDRSSPSSGHLRSDAVISSPDDTRADS. Coiled coils occupy residues 127-213 and 248-409; these read GVHV…ALSI and CEEL…RLDQ. The interval 211-414 is homodimerization; that stretch reads LSIIVDEYKA…RRLDQVTRQR (204 aa).

In terms of assembly, homodimer. Interacts with GGA1, GGA2 and AP1G1.

The protein resides in the membrane. The protein localises to the golgi apparatus. It localises to the trans-Golgi network membrane. Its subcellular location is the trans-Golgi network. Involved in the regulation of membrane traffic through the trans-Golgi network (TGN). Functions in close cooperation with the GGAs in the sorting of hydrolases to lysosomes. This is Coiled-coil domain-containing protein 91 (Ccdc91) from Rattus norvegicus (Rat).